The sequence spans 284 residues: Cytochrome P450 2C31 (284 aa).

Cys-229 lines the heme pocket.

The protein belongs to the cytochrome P450 family. Requires heme as cofactor.

Its subcellular location is the endoplasmic reticulum membrane. The protein resides in the microsome membrane. The catalysed reaction is an organic molecule + reduced [NADPH--hemoprotein reductase] + O2 = an alcohol + oxidized [NADPH--hemoprotein reductase] + H2O + H(+). Cytochromes P450 are a group of heme-thiolate monooxygenases. In liver microsomes, this enzyme is involved in an NADPH-dependent electron transport pathway. It oxidizes a variety of structurally unrelated compounds, including steroids, fatty acids, and xenobiotics. This is Cytochrome P450 2C31 (CYP2C31) from Capra hircus aegagrus (Wild goat).